We begin with the raw amino-acid sequence, 266 residues long: Heat-inducible transcription repressor HrcA (266 aa).

The protein belongs to the HrcA family.

Its function is as follows. Negative regulator of class I heat shock genes (grpE-dnaK-dnaJ and groELS operons). Prevents heat-shock induction of these operons. The chain is Heat-inducible transcription repressor HrcA from Helicobacter pylori (strain ATCC 700392 / 26695) (Campylobacter pylori).